Consider the following 322-residue polypeptide: Dioxygenase himG (322 aa).

Fe cation is bound by residues His-148 and His-229.

It belongs to the PhyH family. Homodimer. It depends on Fe cation as a cofactor.

It participates in secondary metabolite biosynthesis. Polyketide synthase-nonribosomal peptide synthetase; part of the him gene cluster that mediates the biosynthesis of himeic acid A, a ubiquitin-activating enzyme (E1) inhibitor. First, himA, together with the trans-enoyl reductase himH, catalyzes the formation of apolyketide chain, which is then condensed with leucine by the NRPS activity of himA. Dieckmann cyclization and release from himA gives a tetramic acid intermediate as the product of himA PKS-NRPS. HimG then catalyzes alpha-oxidation of the tetramic acid ring, with a subsequent rearrangement to yield apyrone intermediate. Two terminal methyl groups of polyketide and amide side chains are oxidized to carboxylic acids by himC cytochrome P450 monooxygenase to form himeic acid A. Himeic acid A is further converted to himeic acid B and C during culture growth. No gene responsible for pyrone to pyridone conversion was found in the him gene cluster and himeic acid A is non-enzymatically converted to himeic acid C by the incorporation of an ammonium nitrogen atom in a pH5 buffer, and to himeic acid B at a conversion ratio of 50% during incubation in MeOH for 5 days. The chain is Dioxygenase himG from Aspergillus japonicus.